Consider the following 242-residue polypeptide: Probable proteasome subunit alpha type-7 (242 aa).

It belongs to the peptidase T1A family. The 26S proteasome consists of a 20S proteasome core and two 19S regulatory subunits. The 20S proteasome core is composed of 28 subunits that are arranged in four stacked rings, resulting in a barrel-shaped structure. The two end rings are each formed by seven alpha subunits, and the two central rings are each formed by seven beta subunits. The catalytic chamber with the active sites is on the inside of the barrel.

The protein localises to the cytoplasm. Its subcellular location is the nucleus. The proteasome degrades poly-ubiquitinated proteins in the cytoplasm and in the nucleus. It is essential for the regulated turnover of proteins and for the removal of misfolded proteins. The proteasome is a multicatalytic proteinase complex that is characterized by its ability to cleave peptides with Arg, Phe, Tyr, Leu, and Glu adjacent to the leaving group at neutral or slightly basic pH. It has an ATP-dependent proteolytic activity. The polypeptide is Probable proteasome subunit alpha type-7 (PRE10) (Encephalitozoon cuniculi (strain GB-M1) (Microsporidian parasite)).